The sequence spans 410 residues: MRQALLTRFLRYIKIDTQSKASNTRSPSSDSQLEFAVILKQELEQLGFERVELSHLGYLTASVPKTVDGVPCIGFIAHLDTAPDFCGANITPQIIENYDGEDILLGDSDLLSTEQFPSLLNYVGQTLITTDGTTLLGGDDKAGIAEIITALAHLIEHPEIPHGEIRLCFTPDEEIGRGAGHFDVPGFGAQWAYTIDGGELGELEYENFNAATAVIRAKGNNCHPGTAYGVMVNAQTMAARFHAKMPLQDTPEGSKDYDGFFHLVNMQGQTEEAELTYLIRDFDIDIFEQRKRWLTERVNSYNADLVVGSLEIEITDSYFNMKEQIIPHPHVVDIAKEAITSQGITPLVKPIRGGTDGARLSYMALPCPNIFTGGHNFHGKHEYICVESMEKAAGVILAICSLTCEKYLNR.

His-78 provides a ligand contact to Zn(2+). The active site involves Asp-80. Asp-139 lines the Zn(2+) pocket. Glu-173 serves as the catalytic Proton acceptor. Residues Glu-174, Asp-196, and His-378 each coordinate Zn(2+).

This sequence belongs to the peptidase M20B family. Requires Zn(2+) as cofactor.

The protein localises to the cytoplasm. The enzyme catalyses Release of the N-terminal residue from a tripeptide.. Cleaves the N-terminal amino acid of tripeptides. The polypeptide is Peptidase T (Shewanella woodyi (strain ATCC 51908 / MS32)).